A 376-amino-acid chain; its full sequence is Serine/threonine-protein kinase-transforming protein mos (376 aa).

The Protein kinase domain maps to 94-376; it reads VCLMHRLGSG…KALADSIEPM (283 aa). ATP is bound by residues 100–108 and Lys121; that span reads LGSGGFGSV. Asp229 (proton acceptor) is an active-site residue.

It belongs to the protein kinase superfamily. Ser/Thr protein kinase family.

The catalysed reaction is L-seryl-[protein] + ATP = O-phospho-L-seryl-[protein] + ADP + H(+). The enzyme catalyses L-threonyl-[protein] + ATP = O-phospho-L-threonyl-[protein] + ADP + H(+). This is Serine/threonine-protein kinase-transforming protein mos (V-MOS) from Moloney murine sarcoma virus (strain m1) (MoMSV).